Consider the following 771-residue polypeptide: Probable aconitate hydratase, mitochondrial (771 aa).

Residues Gln-86 and 179–181 (DSH) contribute to the substrate site. Positions 372, 435, and 438 each coordinate [4Fe-4S] cluster. Residues Arg-461, Arg-466, Arg-594, and 657–658 (SR) each bind substrate.

The protein belongs to the aconitase/IPM isomerase family. In terms of assembly, monomer. [4Fe-4S] cluster serves as cofactor.

It is found in the mitochondrion. It carries out the reaction citrate = D-threo-isocitrate. The protein operates within carbohydrate metabolism; tricarboxylic acid cycle; isocitrate from oxaloacetate: step 2/2. Catalyzes the isomerization of citrate to isocitrate via cis-aconitate. The chain is Probable aconitate hydratase, mitochondrial (aco2) from Dictyostelium discoideum (Social amoeba).